Here is a 127-residue protein sequence, read N- to C-terminus: Nuclear transport factor 2 (127 aa).

The region spanning 11–124 (VGKQFVEHYY…FLLINDFFRL (114 aa)) is the NTF2 domain.

It localises to the cytoplasm. Its subcellular location is the cytosol. The protein localises to the nucleus outer membrane. The protein resides in the nucleus. It is found in the nuclear pore complex. It localises to the nucleus inner membrane. Its subcellular location is the nucleoplasm. Its function is as follows. Mediates the import of GDP-bound RAN from the cytoplasm into the nucleus which is essential for the function of RAN in cargo receptor-mediated nucleocytoplasmic transport. Thereby, plays indirectly a more general role in cargo receptor-mediated nucleocytoplasmic transport. Interacts with GDP-bound RAN in the cytosol, recruits it to the nuclear pore complex via its interaction with nucleoporins and promotes its nuclear import. The polypeptide is Nuclear transport factor 2 (Dictyostelium discoideum (Social amoeba)).